Reading from the N-terminus, the 633-residue chain is 1-deoxy-D-xylulose-5-phosphate synthase 2 (633 aa).

Residues H73 and 113-115 contribute to the thiamine diphosphate site; that span reads SHA. D145 is a Mg(2+) binding site. Thiamine diphosphate-binding positions include 146 to 147, N175, Y286, and E367; that span reads GA. N175 is a binding site for Mg(2+).

This sequence belongs to the transketolase family. DXPS subfamily. Homodimer. It depends on Mg(2+) as a cofactor. The cofactor is thiamine diphosphate.

The catalysed reaction is D-glyceraldehyde 3-phosphate + pyruvate + H(+) = 1-deoxy-D-xylulose 5-phosphate + CO2. It participates in metabolic intermediate biosynthesis; 1-deoxy-D-xylulose 5-phosphate biosynthesis; 1-deoxy-D-xylulose 5-phosphate from D-glyceraldehyde 3-phosphate and pyruvate: step 1/1. Catalyzes the acyloin condensation reaction between C atoms 2 and 3 of pyruvate and glyceraldehyde 3-phosphate to yield 1-deoxy-D-xylulose-5-phosphate (DXP). This Kitasatospora griseola (Streptomyces griseolosporeus) protein is 1-deoxy-D-xylulose-5-phosphate synthase 2.